The following is a 348-amino-acid chain: Rhodopsin (348 aa).

N-acetylmethionine is present on M1. At M1–Q36 the chain is on the extracellular side. 2 N-linked (GlcNAc...) asparagine glycosylation sites follow: N2 and N15. The chain crosses the membrane as a helical span at residues F37 to V61. Residues T62 to N73 are Cytoplasmic-facing. A helical transmembrane segment spans residues Y74–Y96. The Extracellular portion of the chain corresponds to T97–C110. Residues C110 and C187 are joined by a disulfide bond. A helical transmembrane segment spans residues N111–I133. The 'Ionic lock' involved in activated form stabilization motif lies at E134–Y136. The Cytoplasmic segment spans residues E134 to H152. A helical membrane pass occupies residues A153–V173. Residues G174–S202 are Extracellular-facing. Position 201 (E201) interacts with Zn(2+). Residues F203–G224 traverse the membrane as a helical segment. The Cytoplasmic portion of the chain corresponds to Q225–R252. A helical membrane pass occupies residues M253–Y274. The Extracellular segment spans residues I275–I286. Q279 is a Zn(2+) binding site. Residues F287–M308 traverse the membrane as a helical segment. The residue at position 296 (K296) is an N6-(retinylidene)lysine. Residues M309–A348 are Cytoplasmic-facing. Residues C322 and C323 are each lipidated (S-palmitoyl cysteine). An interaction with SAG region spans residues D330 to A348. S334 is subject to Phosphoserine. Residue T336 is modified to Phosphothreonine. S338 carries the phosphoserine modification. 2 positions are modified to phosphothreonine: T340 and T342. The residue at position 343 (S343) is a Phosphoserine.

It belongs to the G-protein coupled receptor 1 family. Opsin subfamily. As to quaternary structure, homodimer. May form a complex composed of RHO, GRK1 and RCVRN in a Ca(2+)-dependent manner; RCVRN prevents the interaction between GRK1 and RHO. Interacts with GRK1. Interacts (phosphorylated form) with SAG. Interacts with GNAT1. Interacts with GNAT3. SAG and G-proteins compete for a common binding site. Interacts with PRCD; the interaction promotes PRCD stability. Forms a complex with ASAP1 and ARF4. Forms a complex with ASAP1, RAB11A, Rabin8/RAB3IP, ARF4 and RAB11FIP3; the complex regulates Golgi-to-cilia rhodopsin/RHO transport in photoreceptors. In terms of processing, phosphorylated on some or all of the serine and threonine residues present in the C-terminal region. Contains one covalently linked retinal chromophore. Upon light absorption, the covalently bound 11-cis-retinal is converted to all-trans-retinal. After hydrolysis of the Schiff base and release of the covalently bound all-trans-retinal, active rhodopsin is regenerated by binding of a fresh molecule of 11-cis-retinal.

It is found in the membrane. The protein localises to the cell projection. Its subcellular location is the cilium. The protein resides in the photoreceptor outer segment. Functionally, photoreceptor required for image-forming vision at low light intensity. Required for photoreceptor cell viability after birth. Light-induced isomerization of 11-cis to all-trans retinal triggers a conformational change that activates signaling via G-proteins. Subsequent receptor phosphorylation mediates displacement of the bound G-protein alpha subunit by the arrestin SAG and terminates signaling. The sequence is that of Rhodopsin (RHO) from Oryctolagus cuniculus (Rabbit).